A 150-amino-acid polypeptide reads, in one-letter code: D-aminoacyl-tRNA deacylase (150 aa).

The Gly-cisPro motif, important for rejection of L-amino acids motif lies at 138–139 (GP).

It belongs to the DTD family. As to quaternary structure, homodimer.

The protein resides in the cytoplasm. It catalyses the reaction glycyl-tRNA(Ala) + H2O = tRNA(Ala) + glycine + H(+). It carries out the reaction a D-aminoacyl-tRNA + H2O = a tRNA + a D-alpha-amino acid + H(+). Functionally, an aminoacyl-tRNA editing enzyme that deacylates mischarged D-aminoacyl-tRNAs. Also deacylates mischarged glycyl-tRNA(Ala), protecting cells against glycine mischarging by AlaRS. Acts via tRNA-based rather than protein-based catalysis; rejects L-amino acids rather than detecting D-amino acids in the active site. By recycling D-aminoacyl-tRNA to D-amino acids and free tRNA molecules, this enzyme counteracts the toxicity associated with the formation of D-aminoacyl-tRNA entities in vivo and helps enforce protein L-homochirality. The polypeptide is D-aminoacyl-tRNA deacylase (Flavobacterium johnsoniae (strain ATCC 17061 / DSM 2064 / JCM 8514 / BCRC 14874 / CCUG 350202 / NBRC 14942 / NCIMB 11054 / UW101) (Cytophaga johnsonae)).